The chain runs to 428 residues: Light-independent protochlorophyllide reductase subunit N (428 aa).

The [4Fe-4S] cluster site is built by Cys-16, Cys-41, and Cys-102.

It belongs to the BchN/ChlN family. In terms of assembly, protochlorophyllide reductase is composed of three subunits; ChlL, ChlN and ChlB. Forms a heterotetramer of two ChlB and two ChlN subunits. The cofactor is [4Fe-4S] cluster.

It catalyses the reaction chlorophyllide a + oxidized 2[4Fe-4S]-[ferredoxin] + 2 ADP + 2 phosphate = protochlorophyllide a + reduced 2[4Fe-4S]-[ferredoxin] + 2 ATP + 2 H2O. The protein operates within porphyrin-containing compound metabolism; chlorophyll biosynthesis (light-independent). In terms of biological role, component of the dark-operative protochlorophyllide reductase (DPOR) that uses Mg-ATP and reduced ferredoxin to reduce ring D of protochlorophyllide (Pchlide) to form chlorophyllide a (Chlide). This reaction is light-independent. The NB-protein (ChlN-ChlB) is the catalytic component of the complex. The polypeptide is Light-independent protochlorophyllide reductase subunit N (Synechococcus sp. (strain CC9311)).